The following is a 255-amino-acid chain: Tryptophan synthase alpha chain (255 aa).

Active-site proton acceptor residues include E42 and D53.

The protein belongs to the TrpA family. In terms of assembly, tetramer of two alpha and two beta chains.

The enzyme catalyses (1S,2R)-1-C-(indol-3-yl)glycerol 3-phosphate + L-serine = D-glyceraldehyde 3-phosphate + L-tryptophan + H2O. Its pathway is amino-acid biosynthesis; L-tryptophan biosynthesis; L-tryptophan from chorismate: step 5/5. Its function is as follows. The alpha subunit is responsible for the aldol cleavage of indoleglycerol phosphate to indole and glyceraldehyde 3-phosphate. This Wolinella succinogenes (strain ATCC 29543 / DSM 1740 / CCUG 13145 / JCM 31913 / LMG 7466 / NCTC 11488 / FDC 602W) (Vibrio succinogenes) protein is Tryptophan synthase alpha chain.